A 277-amino-acid chain; its full sequence is 2,3,4,5-tetrahydropyridine-2,6-dicarboxylate N-succinyltransferase (277 aa).

Arg106 and Asp143 together coordinate substrate.

Belongs to the transferase hexapeptide repeat family. As to quaternary structure, homotrimer.

It is found in the cytoplasm. The enzyme catalyses (S)-2,3,4,5-tetrahydrodipicolinate + succinyl-CoA + H2O = (S)-2-succinylamino-6-oxoheptanedioate + CoA. Its pathway is amino-acid biosynthesis; L-lysine biosynthesis via DAP pathway; LL-2,6-diaminopimelate from (S)-tetrahydrodipicolinate (succinylase route): step 1/3. The polypeptide is 2,3,4,5-tetrahydropyridine-2,6-dicarboxylate N-succinyltransferase (Xylella fastidiosa (strain Temecula1 / ATCC 700964)).